The following is a 200-amino-acid chain: Pyridoxal 5'-phosphate synthase subunit PdxT (200 aa).

Residue 52–54 participates in L-glutamine binding; it reads GES. C84 (nucleophile) is an active-site residue. Residues R116 and 145–146 contribute to the L-glutamine site; that span reads IR. Catalysis depends on charge relay system residues H181 and E183.

The protein belongs to the glutaminase PdxT/SNO family. In the presence of PdxS, forms a dodecamer of heterodimers. Only shows activity in the heterodimer.

It carries out the reaction aldehydo-D-ribose 5-phosphate + D-glyceraldehyde 3-phosphate + L-glutamine = pyridoxal 5'-phosphate + L-glutamate + phosphate + 3 H2O + H(+). It catalyses the reaction L-glutamine + H2O = L-glutamate + NH4(+). The protein operates within cofactor biosynthesis; pyridoxal 5'-phosphate biosynthesis. Catalyzes the hydrolysis of glutamine to glutamate and ammonia as part of the biosynthesis of pyridoxal 5'-phosphate. The resulting ammonia molecule is channeled to the active site of PdxS. The polypeptide is Pyridoxal 5'-phosphate synthase subunit PdxT (Saccharolobus solfataricus (strain ATCC 35092 / DSM 1617 / JCM 11322 / P2) (Sulfolobus solfataricus)).